Reading from the N-terminus, the 173-residue chain is Adenine phosphoribosyltransferase (173 aa).

Belongs to the purine/pyrimidine phosphoribosyltransferase family. In terms of assembly, homodimer.

The protein localises to the cytoplasm. The enzyme catalyses AMP + diphosphate = 5-phospho-alpha-D-ribose 1-diphosphate + adenine. The protein operates within purine metabolism; AMP biosynthesis via salvage pathway; AMP from adenine: step 1/1. In terms of biological role, catalyzes a salvage reaction resulting in the formation of AMP, that is energically less costly than de novo synthesis. In Desulfosudis oleivorans (strain DSM 6200 / JCM 39069 / Hxd3) (Desulfococcus oleovorans), this protein is Adenine phosphoribosyltransferase.